The sequence spans 253 residues: DNA repair protein RecO (253 aa).

Belongs to the RecO family.

Its function is as follows. Involved in DNA repair and RecF pathway recombination. In Nitrobacter hamburgensis (strain DSM 10229 / NCIMB 13809 / X14), this protein is DNA repair protein RecO.